Consider the following 151-residue polypeptide: Large-conductance mechanosensitive channel (151 aa).

2 consecutive transmembrane segments (helical) span residues 14–34 and 85–105; these read VVDMAVGIIIGGAFGALVNSL and GLFVNALIGFLIMAFAVFLLV.

The protein belongs to the MscL family. Homopentamer.

The protein localises to the cell inner membrane. Its function is as follows. Channel that opens in response to stretch forces in the membrane lipid bilayer. May participate in the regulation of osmotic pressure changes within the cell. The sequence is that of Large-conductance mechanosensitive channel from Chlorobaculum tepidum (strain ATCC 49652 / DSM 12025 / NBRC 103806 / TLS) (Chlorobium tepidum).